A 131-amino-acid chain; its full sequence is Actin-associated protein FAM107A (131 aa).

A coiled-coil region spans residues 57–77; the sequence is VLEHRRRNQLIKKKEEELEAK. The Nuclear localization signal signature appears at 61-71; that stretch reads RRRNQLIKKKE.

In terms of assembly, interacts with ACTB. Interacts with COMMD1; this interaction stabilizes COMMD1 in the nucleus. Interacts with MAP1A. Interacts with PRDX1. Interacts with F-actin.

It is found in the nucleus. Its subcellular location is the cytoplasm. It localises to the cytoskeleton. The protein resides in the stress fiber. The protein localises to the cell junction. It is found in the focal adhesion. Its subcellular location is the cell projection. It localises to the ruffle membrane. The protein resides in the synapse. In terms of biological role, stress-inducible actin-binding protein that plays a role in synaptic and cognitive functions by modulating actin filamentous (F-actin) dynamics. Mediates polymerization of globular actin to F-actin. Also binds to, stabilizes and bundles F-actin. Involved in synaptic function by regulating neurite outgrowth in an actin-dependent manner and for the acquisition of hippocampus-dependent cognitive function, such as learning and long-term memory. Plays a role in the actin and microtubule cytoskeleton organization; negatively regulates focal adhesion (FA) assembly promoting malignant glial cell migration in an actin-, microtubule- and MAP1A-dependent manner. Also involved in neuroblastoma G1/S phase cell cycle progression and cell proliferation inhibition by stimulating ubiquitination of NF-kappa-B subunit RELA and NF-kappa-B degradation in a COMMD1- and actin-dependent manner. May play a role in tumor development. The sequence is that of Actin-associated protein FAM107A from Rattus norvegicus (Rat).